We begin with the raw amino-acid sequence, 520 residues long: 6-phosphofructo-2-kinase/fructose-2,6-bisphosphatase 3 (520 aa).

Residues 1–245 (MPLELTQSRV…VYYLMNIHVQ (245 aa)) form a 6-phosphofructo-2-kinase region. Residue 42–50 (GLPARGKTY) coordinates ATP. Positions 75 and 99 each coordinate beta-D-fructose 6-phosphate. Asp-125 is an active-site residue. Thr-127 and Arg-133 together coordinate beta-D-fructose 6-phosphate. Cys-155 is a catalytic residue. ATP is bound at residue 164 to 169 (NIMEVK). Beta-D-fructose 6-phosphate contacts are provided by Lys-169, Arg-190, and Tyr-194. Residues 246–520 (PRTIYLCRHG…RSSADSSRKH (275 aa)) form a fructose-2,6-bisphosphatase region. Arg-253 contributes to the beta-D-fructose 2,6-bisphosphate binding site. The Tele-phosphohistidine intermediate role is filled by His-254. Positions 260 and 266 each coordinate beta-D-fructose 2,6-bisphosphate. Catalysis depends on Glu-323, which acts as the Proton donor/acceptor. 6 residues coordinate beta-D-fructose 2,6-bisphosphate: Tyr-334, Arg-348, Lys-352, Tyr-363, Gln-389, and Arg-393. 345 to 348 (YALR) contacts ATP. Residues 389–393 (QAVLR) and Tyr-425 each bind ATP. Positions 443-520 (RERSEDAKKG…RSSADSSRKH (78 aa)) are disordered. Position 461 is a phosphoserine; by AMPK (Ser-461). Thr-463 bears the Phosphothreonine mark. Residue Ser-467 is modified to Phosphoserine. Phosphothreonine; by PKC is present on Thr-471. The segment covering 502–520 (LPGQNMKGSRSSADSSRKH) has biased composition (polar residues).

The protein in the C-terminal section; belongs to the phosphoglycerate mutase family. Homodimer. Forms a heterodimer with PFKFB2. In terms of processing, phosphorylation by AMPK stimulates activity. In terms of tissue distribution, ubiquitous.

It carries out the reaction beta-D-fructose 2,6-bisphosphate + H2O = beta-D-fructose 6-phosphate + phosphate. It catalyses the reaction beta-D-fructose 6-phosphate + ATP = beta-D-fructose 2,6-bisphosphate + ADP + H(+). In terms of biological role, catalyzes both the synthesis and degradation of fructose 2,6-bisphosphate. This chain is 6-phosphofructo-2-kinase/fructose-2,6-bisphosphatase 3 (PFKFB3), found in Homo sapiens (Human).